The chain runs to 462 residues: Centrosomal protein of 55 kDa (462 aa).

Positions 1–11 are enriched in basic and acidic residues; sequence MSSRSPKDLIK. The disordered stretch occupies residues 1–25; sequence MSSRSPKDLIKSKWGSRPSSSKSDT. A compositionally biased stretch (low complexity) spans 12–23; the sequence is SKWGSRPSSSKS. Coiled-coil stretches lie at residues 50–185 and 228–400; these read KVAN…QQWL and YLQE…KQLH. Residues S96 and S99 each carry the phosphoserine modification. Positions 157–235 are interaction with TSG101; it reads ANCFNSSMNS…EGYLQEEKQK (79 aa). An interaction with PDCD6IP region spans residues 160–214; the sequence is FNSSMNSIHEKEMQLKDALEKNQQWLVYDQQREAYVKGLLAKIFELEKRTETAAA. The tract at residues 354–462 is required for localization to the interphase centrosome and to the midbody during cytokinesis; it reads QMQACTLDFE…LLVHVEYCMK (109 aa). 2 positions are modified to phosphoserine: S423 and S426. At T428 the chain carries Phosphothreonine. S434 bears the Phosphoserine; by PLK1 mark.

As to quaternary structure, homodimer. Interacts (phosphorylated on Ser-423 and Ser-426) with PLK1; the interaction is indirect via the MTMR3:MTMR4 heterooligomer, occurs during early mitosis, regulates the phosphorylation of CEP55 by PLK1 and its recruitment to the midbody where it can mediate cell abscission. Interacts with AKAP9/CG-NAP; the interaction occurs in interphase and is lost upon mitotic entry. Interacts with PCNT/Kendrin; the interaction occurs in interphase and is lost upon mitotic entry. Directly interacts with PDCD6IP; this interaction is required for PDCD6IP targeting to the midbody; CEP55 binds PDCD6IP in a 2:1 stoichiometry; PDCD6IP competes with TSG101 for the same binding site. Interacts with TSG101; TSG101 competes with PDCD6IP for the same binding site; interaction is required for cytokinesis. Interacts with MVB12A, VPS37B, VPS37C and VPS28. There is a hierachy of phosphorylation, where both Ser-423 and Ser-426 are phosphorylated at the onset of mitosis, prior to Ser-434. Phosphorylation at Ser-423 and Ser-426 is required for dissociation from the centrosome at the G2/M boundary. Phosphorylation at the 3 sites, Ser-423, Ser-426 and Ser-434, is required for protein function at the final stages of cell division to complete cytokinesis successfully.

It localises to the cytoplasm. Its subcellular location is the cytoskeleton. The protein localises to the microtubule organizing center. It is found in the centrosome. The protein resides in the centriole. It localises to the cleavage furrow. Its subcellular location is the midbody. The protein localises to the midbody ring. Its function is as follows. Plays a role in mitotic exit and cytokinesis. Recruits PDCD6IP and TSG101 to midbody during cytokinesis. Required for successful completion of cytokinesis. Not required for microtubule nucleation. Plays a role in the development of the brain and kidney. This is Centrosomal protein of 55 kDa from Rattus norvegicus (Rat).